The chain runs to 161 residues: RNA pyrophosphohydrolase (161 aa).

In terms of domain architecture, Nudix hydrolase spans 6 to 149 (GFRPNVGIIL…KRDVYRKAMV (144 aa)). The Nudix box motif lies at 38–59 (GGIQFGETPEQALFRELREEIG).

It belongs to the Nudix hydrolase family. RppH subfamily. The cofactor is a divalent metal cation.

Functionally, accelerates the degradation of transcripts by removing pyrophosphate from the 5'-end of triphosphorylated RNA, leading to a more labile monophosphorylated state that can stimulate subsequent ribonuclease cleavage. This chain is RNA pyrophosphohydrolase, found in Acinetobacter baumannii (strain AB307-0294).